A 206-amino-acid chain; its full sequence is Probable GTP-binding protein EngB (206 aa).

In terms of domain architecture, EngB-type G spans 23 to 202 (HTAEVAFVGR…WGALLDTFGK (180 aa)). Residues 31–38 (GRSNVGKS), 58–62 (GRTRT), 83–86 (DLPG), 150–153 (TKVD), and 181–183 (FSS) contribute to the GTP site. Residues serine 38 and threonine 60 each coordinate Mg(2+).

It belongs to the TRAFAC class TrmE-Era-EngA-EngB-Septin-like GTPase superfamily. EngB GTPase family. The cofactor is Mg(2+).

In terms of biological role, necessary for normal cell division and for the maintenance of normal septation. This Myxococcus xanthus (strain DK1622) protein is Probable GTP-binding protein EngB.